The sequence spans 116 residues: Large ribosomal subunit protein bL19 (116 aa).

It belongs to the bacterial ribosomal protein bL19 family.

Its function is as follows. This protein is located at the 30S-50S ribosomal subunit interface and may play a role in the structure and function of the aminoacyl-tRNA binding site. The sequence is that of Large ribosomal subunit protein bL19 from Staphylococcus aureus (strain USA300).